The chain runs to 427 residues: 3-phosphoshikimate 1-carboxyvinyltransferase (427 aa).

3-phosphoshikimate is bound by residues lysine 20, serine 21, and arginine 25. Lysine 20 serves as a coordination point for phosphoenolpyruvate. 2 residues coordinate phosphoenolpyruvate: glycine 92 and arginine 120. The 3-phosphoshikimate site is built by serine 166, glutamine 168, aspartate 312, and lysine 339. Phosphoenolpyruvate is bound at residue glutamine 168. Aspartate 312 acts as the Proton acceptor in catalysis. Arginine 343 and arginine 385 together coordinate phosphoenolpyruvate.

This sequence belongs to the EPSP synthase family. As to quaternary structure, monomer.

It is found in the cytoplasm. It carries out the reaction 3-phosphoshikimate + phosphoenolpyruvate = 5-O-(1-carboxyvinyl)-3-phosphoshikimate + phosphate. The protein operates within metabolic intermediate biosynthesis; chorismate biosynthesis; chorismate from D-erythrose 4-phosphate and phosphoenolpyruvate: step 6/7. Functionally, catalyzes the transfer of the enolpyruvyl moiety of phosphoenolpyruvate (PEP) to the 5-hydroxyl of shikimate-3-phosphate (S3P) to produce enolpyruvyl shikimate-3-phosphate and inorganic phosphate. This chain is 3-phosphoshikimate 1-carboxyvinyltransferase, found in Streptococcus equi subsp. zooepidemicus (strain H70).